Reading from the N-terminus, the 122-residue chain is UPF0102 protein NGR_c36770 (122 aa).

This sequence belongs to the UPF0102 family.

The protein is UPF0102 protein NGR_c36770 of Sinorhizobium fredii (strain NBRC 101917 / NGR234).